The following is a 115-amino-acid chain: MATRLLCCVVLCLLGEELIDARVTQTPRHKVTEMGQEVTMRCQPILGHNTVFWYRQTMMQGLELLAYFRNRAPLDDSGMPKDRFSAEMPDATLATLKIQPSEPRDSAVYFCASGL.

An N-terminal signal peptide occupies residues 1-21; sequence MATRLLCCVVLCLLGEELIDA. Residues 22 to 115 enclose the Ig-like domain; it reads RVTQTPRHKV…SAVYFCASGL (94 aa). A disulfide bridge connects residues C42 and C111.

In terms of assembly, alpha-beta TR is a heterodimer composed of an alpha and beta chain; disulfide-linked. The alpha-beta TR is associated with the transmembrane signaling CD3 coreceptor proteins to form the TR-CD3 (TcR or TCR). The assembly of alpha-beta TR heterodimers with CD3 occurs in the endoplasmic reticulum where a single alpha-beta TR heterodimer associates with one CD3D-CD3E heterodimer, one CD3G-CD3E heterodimer and one CD247 homodimer forming a stable octameric structure. CD3D-CD3E and CD3G-CD3E heterodimers preferentially associate with TR alpha and TR beta chains, respectively. The association of the CD247 homodimer is the last step of TcR assembly in the endoplasmic reticulum and is required for transport to the cell surface.

The protein localises to the cell membrane. Functionally, v region of the variable domain of T cell receptor (TR) beta chain that participates in the antigen recognition. Alpha-beta T cell receptors are antigen specific receptors which are essential to the immune response and are present on the cell surface of T lymphocytes. Recognize peptide-major histocompatibility (MH) (pMH) complexes that are displayed by antigen presenting cells (APC), a prerequisite for efficient T cell adaptive immunity against pathogens. Binding of alpha-beta TR to pMH complex initiates TR-CD3 clustering on the cell surface and intracellular activation of LCK that phosphorylates the ITAM motifs of CD3G, CD3D, CD3E and CD247 enabling the recruitment of ZAP70. In turn ZAP70 phosphorylates LAT, which recruits numerous signaling molecules to form the LAT signalosome. The LAT signalosome propagates signal branching to three major signaling pathways, the calcium, the mitogen-activated protein kinase (MAPK) kinase and the nuclear factor NF-kappa-B (NF-kB) pathways, leading to the mobilization of transcription factors that are critical for gene expression and essential for T cell growth and differentiation. The T cell repertoire is generated in the thymus, by V-(D)-J rearrangement. This repertoire is then shaped by intrathymic selection events to generate a peripheral T cell pool of self-MH restricted, non-autoaggressive T cells. Post-thymic interaction of alpha-beta TR with the pMH complexes shapes TR structural and functional avidity. The sequence is that of T cell receptor beta variable 12-5 from Homo sapiens (Human).